A 174-amino-acid chain; its full sequence is Superoxide dismutase [Cu-Zn] (174 aa).

The first 23 residues, 1-23 (MIRLSAAAALGLAAALAASPALA), serve as a signal peptide directing secretion. Residues histidine 68, histidine 70, and histidine 86 each coordinate Cu cation. A disulfide bridge links cysteine 75 with cysteine 170. Zn(2+) contacts are provided by histidine 86, histidine 95, aspartate 104, and aspartate 107. Histidine 150 contacts Cu cation.

This sequence belongs to the Cu-Zn superoxide dismutase family. As to quaternary structure, homodimer. Requires Cu cation as cofactor. Zn(2+) is required as a cofactor.

The protein localises to the periplasm. The enzyme catalyses 2 superoxide + 2 H(+) = H2O2 + O2. Destroys radicals which are normally produced within the cells and which are toxic to biological systems. May function against extracytoplasmic toxic oxygen species. This chain is Superoxide dismutase [Cu-Zn] (sodC), found in Caulobacter vibrioides (strain ATCC 19089 / CIP 103742 / CB 15) (Caulobacter crescentus).